Here is a 573-residue protein sequence, read N- to C-terminus: Kinesin light chain 1 (573 aa).

Positions lysine 27 to lysine 156 form a coiled coil. Residues lysine 155–leucine 176 show a composition bias toward basic and acidic residues. Residues lysine 155–glutamine 203 form a disordered region. A Phosphoserine modification is found at serine 162. Low complexity predominate over residues glycine 188 to glutamine 203. 5 TPR repeats span residues leucine 213 to threonine 246, alanine 255 to threonine 288, alanine 297 to valine 330, alanine 339 to lysine 372, and alanine 381 to arginine 414. Tyrosine 449 is subject to Phosphotyrosine. Residue serine 460 is modified to Phosphoserine. The stretch at threonine 464–glycine 497 is one TPR 6 repeat. A phosphoserine; by AMPK mark is found at serine 521 and serine 524. Glutamate 547 carries the phosphoserine modification. The interval serine 553–arginine 573 is disordered.

The protein belongs to the kinesin light chain family. In terms of assembly, oligomeric complex composed of two heavy chains and two light chains. Interacts with SPAG9. Interacts with ATCAY; may link mitochondria to KLC1 and regulate mitochondria localization into neuron projections. Interacts (via TPR repeats) with TOR1A; the interaction associates TOR1A with the kinesin oligomeric complex. Interacts with BORCS5. Interacts with MAPK8IP3/JIP3 and NTRK2/TRKB; interaction with NTRK2/TRKB is mediated by MAPK8IP3/JIP3. Interacts with CLSTN1; phosphorylation at Ser-460 inhibits interaction with CLSTN1. As to quaternary structure, (Microbial infection) Interacts with adenovirus hexon-interlacing protein; this interaction leads to capsid disruption at the nuclear pore complex during virus entry into host cell. In terms of processing, phosphorylation at Ser-460 by ERK inhibits interaction with CLSTN1 and localization to cytoplasmic vesicles. As to expression, found in a variety of tissues. Mostly abundant in brain and spine.

It is found in the cell projection. The protein localises to the growth cone. The protein resides in the cytoplasmic vesicle. It localises to the cytoplasm. Its subcellular location is the cytoskeleton. In terms of biological role, kinesin is a microtubule-associated force-producing protein that may play a role in organelle transport. The light chain may function in coupling of cargo to the heavy chain or in the modulation of its ATPase activity. The chain is Kinesin light chain 1 (KLC1) from Homo sapiens (Human).